Here is a 266-residue protein sequence, read N- to C-terminus: 3-methyl-2-oxobutanoate hydroxymethyltransferase (266 aa).

Mg(2+) contacts are provided by Asp45 and Asp84. Residues 45-46 (DS), Asp84, and Lys112 each bind 3-methyl-2-oxobutanoate. Residue Glu114 coordinates Mg(2+). Residue Glu181 is the Proton acceptor of the active site.

Belongs to the PanB family. In terms of assembly, homodecamer; pentamer of dimers. Requires Mg(2+) as cofactor.

Its subcellular location is the cytoplasm. The enzyme catalyses 3-methyl-2-oxobutanoate + (6R)-5,10-methylene-5,6,7,8-tetrahydrofolate + H2O = 2-dehydropantoate + (6S)-5,6,7,8-tetrahydrofolate. Its pathway is cofactor biosynthesis; (R)-pantothenate biosynthesis; (R)-pantoate from 3-methyl-2-oxobutanoate: step 1/2. Its function is as follows. Catalyzes the reversible reaction in which hydroxymethyl group from 5,10-methylenetetrahydrofolate is transferred onto alpha-ketoisovalerate to form ketopantoate. The sequence is that of 3-methyl-2-oxobutanoate hydroxymethyltransferase from Pseudomonas fluorescens (strain SBW25).